The primary structure comprises 177 residues: Large ribosomal subunit protein uL6 (177 aa).

This sequence belongs to the universal ribosomal protein uL6 family. In terms of assembly, part of the 50S ribosomal subunit.

In terms of biological role, this protein binds to the 23S rRNA, and is important in its secondary structure. It is located near the subunit interface in the base of the L7/L12 stalk, and near the tRNA binding site of the peptidyltransferase center. The chain is Large ribosomal subunit protein uL6 from Polynucleobacter asymbioticus (strain DSM 18221 / CIP 109841 / QLW-P1DMWA-1) (Polynucleobacter necessarius subsp. asymbioticus).